Reading from the N-terminus, the 108-residue chain is VQ motif-containing protein 10 (108 aa).

Residues 29–38 carry the VQ motif; sequence FKTVVQELTG. The interval 65–85 is disordered; sequence IGEDTRQLHGGGGGGGRMGTT. A compositionally biased stretch (gly residues) spans 73–82; it reads HGGGGGGGRM.

In terms of assembly, interacts with WRKY25, WRKY26 and WRKY33.

It is found in the nucleus. In terms of biological role, may modulate WRKY transcription factor activities. This Arabidopsis thaliana (Mouse-ear cress) protein is VQ motif-containing protein 10.